A 409-amino-acid polypeptide reads, in one-letter code: Arginine deiminase (409 aa).

The active-site Amidino-cysteine intermediate is C399.

This sequence belongs to the arginine deiminase family.

The protein resides in the cytoplasm. The enzyme catalyses L-arginine + H2O = L-citrulline + NH4(+). It functions in the pathway amino-acid degradation; L-arginine degradation via ADI pathway; carbamoyl phosphate from L-arginine: step 1/2. This chain is Arginine deiminase, found in Borrelia recurrentis (strain A1).